The sequence spans 73 residues: SIFamide-related peptide (73 aa).

Residues methionine 1–alanine 23 form the signal peptide. The residue at position 35 (phenylalanine 35) is a Phenylalanine amide. A propeptide spanning residues serine 39–asparagine 73 is cleaved from the precursor.

Expressed in brain, the retrocerebral complex and in ventral, thoracic and abdominal ganglia (at protein level).

The protein localises to the secreted. The protein is SIFamide-related peptide of Camponotus floridanus (Florida carpenter ant).